We begin with the raw amino-acid sequence, 329 residues long: MSSTPVNVTVTGAAGQIGYALLFRIASGQLLGADTPVKLRLLEIPQAVRAAEGTALELEDSAFPLLAGVDVFDDAKRAFEGTNVALLVGARPRTKGMERGDLLSANGGIFKPQGEAINSGAAEDIRVLVVGNPANTNALIAQTHAPDVPAERFTAMTRLDHNRAIAQLAKKLGVPSAEIKKITIWGNHSATQYPDIFHAEVGGRSGAEAVGDQAWIADEFIPRVAKRGAEIIEVRGASSAASAASAAIDHIFTWVNGTPAGDWTSAAIPSDGSYGVPEGLISSFPVTASGGRFEIVQGLELDAFSREKIDASVRELAEEREAVRALGLI.

NAD(+) is bound at residue 12–18 (GAAGQIG). Residues R93 and R99 each contribute to the substrate site. NAD(+) is bound by residues N106, Q113, and 130-132 (VGN). The substrate site is built by N132 and R163. H188 acts as the Proton acceptor in catalysis.

This sequence belongs to the LDH/MDH superfamily. MDH type 2 family.

The catalysed reaction is (S)-malate + NAD(+) = oxaloacetate + NADH + H(+). Its function is as follows. Catalyzes the reversible oxidation of malate to oxaloacetate. This Frankia casuarinae (strain DSM 45818 / CECT 9043 / HFP020203 / CcI3) protein is Malate dehydrogenase.